Reading from the N-terminus, the 303-residue chain is Sulfate adenylyltransferase subunit 2 (303 aa).

Residues 281 to 303 (RQGRVIDHDSSGSMEKKKQEGYF) are disordered.

It belongs to the PAPS reductase family. CysD subfamily. As to quaternary structure, heterodimer composed of CysD, the smaller subunit, and CysN.

It catalyses the reaction sulfate + ATP + H(+) = adenosine 5'-phosphosulfate + diphosphate. Its pathway is sulfur metabolism; hydrogen sulfide biosynthesis; sulfite from sulfate: step 1/3. With CysN forms the ATP sulfurylase (ATPS) that catalyzes the adenylation of sulfate producing adenosine 5'-phosphosulfate (APS) and diphosphate, the first enzymatic step in sulfur assimilation pathway. APS synthesis involves the formation of a high-energy phosphoric-sulfuric acid anhydride bond driven by GTP hydrolysis by CysN coupled to ATP hydrolysis by CysD. The protein is Sulfate adenylyltransferase subunit 2 of Saccharophagus degradans (strain 2-40 / ATCC 43961 / DSM 17024).